Reading from the N-terminus, the 354-residue chain is Neutral protease 2 homolog MEP3 (354 aa).

A signal peptide spans 1 to 19; the sequence is MHFTSSLLALVALTTQALA. Residues 20–179 constitute a propeptide that is removed on maturation; it reads FPLNDLPKRD…QSAIPKLEKR (160 aa). Disulfide bonds link C186–C256 and C263–C281. H305 contacts Zn(2+). E306 is a catalytic residue. Zn(2+) contacts are provided by H309 and D320.

It belongs to the peptidase M35 family. The cofactor is Zn(2+).

It localises to the secreted. It carries out the reaction Preferential cleavage of bonds with hydrophobic residues in P1'. Also 3-Asn-|-Gln-4 and 8-Gly-|-Ser-9 bonds in insulin B chain.. Secreted metalloproteinase that allows assimilation of proteinaceous substrates. Shows high activities on basic nuclear substrates such as histone and protamine. May be involved in virulence. In Coccidioides posadasii (strain C735) (Valley fever fungus), this protein is Neutral protease 2 homolog MEP3 (MEP3).